The primary structure comprises 298 residues: Mimecan (298 aa).

The signal sequence occupies residues 1 to 20 (MKTLQSTLLLLLFVPLIKPA). A glycan (N-linked (GlcNAc...) (keratan sulfate) asparagine) is linked at N88. LRR repeat units lie at residues 112 to 131 (DAVP…FNKI), 132 to 155 (KKLT…GNLI), 156 to 179 (EDIE…ENQL), 180 to 199 (LKLP…YNKI), 200 to 225 (KSRG…HNAL), 226 to 246 (ESVP…FNNI), and 247 to 277 (ASIT…GNPI). N214 carries an N-linked (GlcNAc...) (keratan sulfate) asparagine glycan. Residues C255 and C288 are joined by a disulfide bond. N258 is a glycosylation site (N-linked (GlcNAc...) (keratan sulfate) asparagine).

Belongs to the small leucine-rich proteoglycan (SLRP) family. SLRP class III subfamily. Post-translationally, contains keratan sulfate.

The protein resides in the secreted. It localises to the extracellular space. It is found in the extracellular matrix. Induces bone formation in conjunction with TGF-beta-1 or TGF-beta-2. This chain is Mimecan (OGN), found in Pongo abelii (Sumatran orangutan).